The chain runs to 701 residues: DNA ligase (701 aa).

NAD(+) contacts are provided by residues 43-47 (DAAYD), 92-93 (SL), and Glu-126. Catalysis depends on Lys-128, which acts as the N6-AMP-lysine intermediate. Positions 149, 186, 302, and 326 each coordinate NAD(+). Zn(2+) is bound by residues Cys-420, Cys-423, Cys-444, and Cys-450. The BRCT domain occupies 623-701 (ANDSPVAGKT…EDEWFDLIGA (79 aa)).

The protein belongs to the NAD-dependent DNA ligase family. LigA subfamily. It depends on Mg(2+) as a cofactor. Mn(2+) is required as a cofactor.

The catalysed reaction is NAD(+) + (deoxyribonucleotide)n-3'-hydroxyl + 5'-phospho-(deoxyribonucleotide)m = (deoxyribonucleotide)n+m + AMP + beta-nicotinamide D-nucleotide.. Functionally, DNA ligase that catalyzes the formation of phosphodiester linkages between 5'-phosphoryl and 3'-hydroxyl groups in double-stranded DNA using NAD as a coenzyme and as the energy source for the reaction. It is essential for DNA replication and repair of damaged DNA. The sequence is that of DNA ligase from Maricaulis maris (strain MCS10) (Caulobacter maris).